We begin with the raw amino-acid sequence, 312 residues long: MENYNQTSTDFILLGFFPPSRIGLFLFILIVFIFLMALIGNLSMILLIFLDTHLHTPMYFLLSQLSLIDLNYISTIVPKMASDFLSGNKSISFTGCGIQSFFFSALGGAEALLLASMAYDRYIAICFPLHYPIRMSKRMCVLMITGSWIIGSINACAHTVYVLHIPYCQSRAINHFFCDVPAMVTLACMDTWVYEGTVFLSTTIFLVFPFIAISCSYGRVLLAVYHMKSAEGRKKAYLTCSTHLTVVTFYYAPFVYTYLRPRSLRSPTEDKVLAVFYTTLTPMLNPIIYSLRNKEVMGALTRVSQRICSGKM.

Residues 1-24 (MENYNQTSTDFILLGFFPPSRIGL) are Extracellular-facing. Asparagine 5 is a glycosylation site (N-linked (GlcNAc...) asparagine). A helical transmembrane segment spans residues 25–48 (FLFILIVFIFLMALIGNLSMILLI). Topologically, residues 49 to 56 (FLDTHLHT) are cytoplasmic. A helical membrane pass occupies residues 57-78 (PMYFLLSQLSLIDLNYISTIVP). Residues 79–99 (KMASDFLSGNKSISFTGCGIQ) lie on the Extracellular side of the membrane. Asparagine 88 carries an N-linked (GlcNAc...) asparagine glycan. A disulfide bridge connects residues cysteine 96 and cysteine 188. The helical transmembrane segment at 100 to 119 (SFFFSALGGAEALLLASMAY) threads the bilayer. Residues 120–138 (DRYIAICFPLHYPIRMSKR) lie on the Cytoplasmic side of the membrane. A helical transmembrane segment spans residues 139-157 (MCVLMITGSWIIGSINACA). The Extracellular segment spans residues 158-194 (HTVYVLHIPYCQSRAINHFFCDVPAMVTLACMDTWVY). A helical transmembrane segment spans residues 195-218 (EGTVFLSTTIFLVFPFIAISCSYG). Residues 219-235 (RVLLAVYHMKSAEGRKK) lie on the Cytoplasmic side of the membrane. The chain crosses the membrane as a helical span at residues 236 to 258 (AYLTCSTHLTVVTFYYAPFVYTY). The Extracellular segment spans residues 259 to 271 (LRPRSLRSPTEDK). A helical transmembrane segment spans residues 272–291 (VLAVFYTTLTPMLNPIIYSL). Topologically, residues 292–312 (RNKEVMGALTRVSQRICSGKM) are cytoplasmic.

The protein belongs to the G-protein coupled receptor 1 family.

The protein resides in the cell membrane. In terms of biological role, odorant receptor. In Homo sapiens (Human), this protein is Olfactory receptor 2L3 (OR2L3).